The primary structure comprises 272 residues: MASSTSLGNVGDTTALTPLLRGATTTTTVQLKQTDSNSQDQQKFQKYLNTAQALHQMGVIVPELSQGGWQSQTARHSSTRGLQSAGANRGASLAARTTTTVGVGRRDSTSTTLELPNVITQLYHTSTSQLAYLNGQIVVMGSNAVPSLWYWVVDERTTSGRATWWAKTHLNFGTEVQKNFVENQLGFKSEDNSNTSLTNFKSQGLTQPAYLISGLDVVADHLVFAAFKAGAVGYDMTTDSNASTYNQALTWSTTAGLDSDGGTTTWWRILRG.

The protein belongs to the MgpC family.

In Mycoplasma pneumoniae (strain ATCC 29342 / M129 / Subtype 1) (Mycoplasmoides pneumoniae), this protein is Putative MgpC-like protein MPN_102.